A 501-amino-acid polypeptide reads, in one-letter code: Glutamyl-tRNA(Gln) amidotransferase subunit A (501 aa).

Residues K80 and S155 each act as charge relay system in the active site. The active-site Acyl-ester intermediate is the S179.

This sequence belongs to the amidase family. GatA subfamily. As to quaternary structure, heterotrimer of A, B and C subunits.

The enzyme catalyses L-glutamyl-tRNA(Gln) + L-glutamine + ATP + H2O = L-glutaminyl-tRNA(Gln) + L-glutamate + ADP + phosphate + H(+). Its function is as follows. Allows the formation of correctly charged Gln-tRNA(Gln) through the transamidation of misacylated Glu-tRNA(Gln) in organisms which lack glutaminyl-tRNA synthetase. The reaction takes place in the presence of glutamine and ATP through an activated gamma-phospho-Glu-tRNA(Gln). This Cupriavidus taiwanensis (strain DSM 17343 / BCRC 17206 / CCUG 44338 / CIP 107171 / LMG 19424 / R1) (Ralstonia taiwanensis (strain LMG 19424)) protein is Glutamyl-tRNA(Gln) amidotransferase subunit A.